Here is a 341-residue protein sequence, read N- to C-terminus: B3 domain-containing transcription factor VRN1 (341 aa).

A DNA-binding region (TF-B3 1) is located at residues Phe-5–Ser-98. Residues Gly-166–Thr-223 are disordered. Residues Ile-179–Lys-188 show a composition bias toward basic residues. The span at Pro-200–Phe-211 shows a compositional bias: basic and acidic residues. Residues Phe-244–Asn-338 constitute a DNA-binding region (TF-B3 2).

In terms of tissue distribution, expressed in roots and at lower levels in aerial parts.

The protein localises to the nucleus. In terms of biological role, essential protein. Involved in the regulation of vernalization. Acts as a transcriptional repressor of FLC, a major target of the vernalization pathway. Binds DNA in vitro in a non-sequence-specific manner. The polypeptide is B3 domain-containing transcription factor VRN1 (Arabidopsis thaliana (Mouse-ear cress)).